The following is a 317-amino-acid chain: Zinc finger protein CRM3 (317 aa).

Positions 1-15 (MNFSLSKQSSEKQSS) are enriched in low complexity. A disordered region spans residues 1 to 22 (MNFSLSKQSSEKQSSYTDKSRS). 2 consecutive C2H2-type zinc fingers follow at residues 254-276 (KQCP…YLIH) and 282-306 (FKCT…LKSH).

Its subcellular location is the nucleus. Its function is as follows. Probable transcription factor involved in the regulation of the transcription of genes involved in cell rescue and defense, as well as cell cycle and DNA processing. The polypeptide is Zinc finger protein CRM3 (Saccharomyces cerevisiae (strain ATCC 204508 / S288c) (Baker's yeast)).